The following is a 275-amino-acid chain: U6 snRNA phosphodiesterase 1 (275 aa).

The interval 1 to 25 is disordered; it reads MEFLKHYEDDEDQDDENNTKDENVN. The active-site Proton acceptor is H122. AMP-binding positions include 122-124, Y206, and 208-214; these read HIS and NPEPHLS. UMP is bound by residues Y206 and 210–214; that span reads EPHLS. The active-site Proton donor is H212.

It belongs to the 2H phosphoesterase superfamily. USB1 family.

The protein localises to the nucleus. The catalysed reaction is a 3'-end uridylyl-uridine-RNA = a 3'-end 2',3'-cyclophospho-uridine-RNA + uridine. Functionally, 3'-5' RNA exonuclease that trims the 3' end of oligo(U) tracts of the pre-U6 small nuclear RNA (snRNA) molecule, leading to the formation of a mature U6 snRNA 3' end-terminated with a 2',3'-cyclic phosphate. Participates in the U6 snRNA 3' end processing that prevents U6 snRNA degradation. The polypeptide is U6 snRNA phosphodiesterase 1 (Dictyostelium discoideum (Social amoeba)).